A 217-amino-acid chain; its full sequence is Thymidylate kinase (217 aa).

ATP is bound at residue 14 to 21 (GNEGSGKT).

It belongs to the thymidylate kinase family.

It carries out the reaction dTMP + ATP = dTDP + ADP. Its function is as follows. Phosphorylation of dTMP to form dTDP in both de novo and salvage pathways of dTTP synthesis. The protein is Thymidylate kinase of Orientia tsutsugamushi (strain Ikeda) (Rickettsia tsutsugamushi).